A 72-amino-acid chain; its full sequence is Toxin Cll8 (72 aa).

Positions 1-4 are cleaved as a signal peptide; it reads TVSA. In terms of domain architecture, LCN-type CS-alpha/beta spans 5-70; sequence KEGYLVKKSN…TWPLPNKSCG (66 aa). Cystine bridges form between Cys16–Cys69, Cys20–Cys45, Cys29–Cys50, and Cys33–Cys52. Cys69 is modified (cysteine amide).

It belongs to the long (4 C-C) scorpion toxin superfamily. Sodium channel inhibitor family. Beta subfamily. Expressed by the venom gland.

The protein localises to the secreted. Beta toxins bind voltage-independently at site-4 of sodium channels (Nav) and shift the voltage of activation toward more negative potentials thereby affecting sodium channel activation and promoting spontaneous and repetitive firing. The polypeptide is Toxin Cll8 (Centruroides limpidus (Mexican scorpion)).